The following is a 149-amino-acid chain: Endoribonuclease YbeY (149 aa).

Zn(2+) contacts are provided by histidine 113, histidine 117, and histidine 123.

Belongs to the endoribonuclease YbeY family. Zn(2+) is required as a cofactor.

Its subcellular location is the cytoplasm. Functionally, single strand-specific metallo-endoribonuclease involved in late-stage 70S ribosome quality control and in maturation of the 3' terminus of the 16S rRNA. This chain is Endoribonuclease YbeY, found in Saccharophagus degradans (strain 2-40 / ATCC 43961 / DSM 17024).